Here is a 932-residue protein sequence, read N- to C-terminus: LPS-assembly protein LptD (932 aa).

A signal peptide spans 1–33 (MALKSPAFRRKFPLLVTGGLLALQPLATSYAVA). Residues 54–87 (PVNNLPPRPVHEGAAVSSGTEAASEGETADRPML) are disordered.

It belongs to the LptD family. Component of the lipopolysaccharide transport and assembly complex. Interacts with LptE and LptA.

The protein resides in the cell outer membrane. Together with LptE, is involved in the assembly of lipopolysaccharide (LPS) at the surface of the outer membrane. In Pseudomonas putida (strain GB-1), this protein is LPS-assembly protein LptD.